We begin with the raw amino-acid sequence, 353 residues long: Photosystem II D2 protein (353 aa).

Thr-2 carries the post-translational modification N-acetylthreonine. Thr-2 is modified (phosphothreonine). A helical membrane pass occupies residues 41–61 (CAYFALGGWFTGTTFVTSWYT). His-118 provides a ligand contact to chlorophyll a. A helical transmembrane segment spans residues 125–141 (GFMLRQFELARSVQLRP). Pheophytin a-binding residues include Gln-130 and Asn-143. Residues 153–166 (VFVSVFLIYPLGQS) traverse the membrane as a helical segment. His-198 provides a ligand contact to chlorophyll a. A helical transmembrane segment spans residues 208–228 (AALLCAIHGATVENTLFEDGD). Residues His-215 and Phe-262 each coordinate a plastoquinone. His-215 lines the Fe cation pocket. His-269 lines the Fe cation pocket. Residues 279 to 295 (GLWMSAIGVVGLALNLR) form a helical membrane-spanning segment.

The protein belongs to the reaction center PufL/M/PsbA/D family. PSII is composed of 1 copy each of membrane proteins PsbA, PsbB, PsbC, PsbD, PsbE, PsbF, PsbH, PsbI, PsbJ, PsbK, PsbL, PsbM, PsbT, PsbX, PsbY, PsbZ, Psb30/Ycf12, at least 3 peripheral proteins of the oxygen-evolving complex and a large number of cofactors. It forms dimeric complexes. Requires The D1/D2 heterodimer binds P680, chlorophylls that are the primary electron donor of PSII, and subsequent electron acceptors. It shares a non-heme iron and each subunit binds pheophytin, quinone, additional chlorophylls, carotenoids and lipids. There is also a Cl(-1) ion associated with D1 and D2, which is required for oxygen evolution. The PSII complex binds additional chlorophylls, carotenoids and specific lipids. as cofactor.

Its subcellular location is the plastid. The protein localises to the chloroplast thylakoid membrane. The catalysed reaction is 2 a plastoquinone + 4 hnu + 2 H2O = 2 a plastoquinol + O2. In terms of biological role, photosystem II (PSII) is a light-driven water:plastoquinone oxidoreductase that uses light energy to abstract electrons from H(2)O, generating O(2) and a proton gradient subsequently used for ATP formation. It consists of a core antenna complex that captures photons, and an electron transfer chain that converts photonic excitation into a charge separation. The D1/D2 (PsbA/PsbD) reaction center heterodimer binds P680, the primary electron donor of PSII as well as several subsequent electron acceptors. D2 is needed for assembly of a stable PSII complex. The protein is Photosystem II D2 protein of Welwitschia mirabilis (Tree tumbo).